We begin with the raw amino-acid sequence, 376 residues long: UDP-N-acetylglucosamine--N-acetylmuramyl-(pentapeptide) pyrophosphoryl-undecaprenol N-acetylglucosamine transferase (376 aa).

Residues 11–13 (TGG), asparagine 117, arginine 160, serine 208, and glutamine 310 each bind UDP-N-acetyl-alpha-D-glucosamine.

The protein belongs to the glycosyltransferase 28 family. MurG subfamily.

The protein localises to the cell inner membrane. The enzyme catalyses di-trans,octa-cis-undecaprenyl diphospho-N-acetyl-alpha-D-muramoyl-L-alanyl-D-glutamyl-meso-2,6-diaminopimeloyl-D-alanyl-D-alanine + UDP-N-acetyl-alpha-D-glucosamine = di-trans,octa-cis-undecaprenyl diphospho-[N-acetyl-alpha-D-glucosaminyl-(1-&gt;4)]-N-acetyl-alpha-D-muramoyl-L-alanyl-D-glutamyl-meso-2,6-diaminopimeloyl-D-alanyl-D-alanine + UDP + H(+). It functions in the pathway cell wall biogenesis; peptidoglycan biosynthesis. Functionally, cell wall formation. Catalyzes the transfer of a GlcNAc subunit on undecaprenyl-pyrophosphoryl-MurNAc-pentapeptide (lipid intermediate I) to form undecaprenyl-pyrophosphoryl-MurNAc-(pentapeptide)GlcNAc (lipid intermediate II). The chain is UDP-N-acetylglucosamine--N-acetylmuramyl-(pentapeptide) pyrophosphoryl-undecaprenol N-acetylglucosamine transferase from Rickettsia rickettsii (strain Iowa).